Reading from the N-terminus, the 1217-residue chain is WD repeat-containing protein on Y chromosome (1217 aa).

8 WD repeats span residues 155-199, 323-362, 366-405, 456-495, 508-547, 595-635, 740-779, and 823-862; these read EDMT…LRSA, RIPL…EPSA, GHNG…LLQT, THAA…RKII, TIDI…VVRN, FHTD…RRYN, KVGD…IPEA, and GHLK…LGTL. Disordered regions lie at residues 910-929 and 1033-1217; these read QVKR…VEDT and AGGQ…KDKP. The segment covering 919–929 has biased composition (acidic residues); the sequence is EREDEGEVEDT. 3 stretches are compositionally biased toward polar residues: residues 1041–1054, 1085–1107, and 1137–1179; these read RASS…TNSI, FGPN…SQLK, and PVST…TSAN. Over residues 1181-1190 the composition is skewed to low complexity; sequence KPDIMPVKIK. The segment covering 1198–1210 has biased composition (polar residues); it reads RNTAPVQITTSIA.

The sequence is that of WD repeat-containing protein on Y chromosome from Drosophila mojavensis (Fruit fly).